Consider the following 2225-residue polypeptide: Multifunctional protein pyr1-3 (2225 aa).

An N-acetylmethionine modification is found at methionine 1. A GATase (Glutamine amidotransferase) region spans residues 40 to 390 (MVGYNESISD…NVCGEQQHKS (351 aa)). Residues serine 51, glycine 245, and glycine 247 each coordinate L-glutamine. The region spanning 196–388 (KVIVLDCGIK…VDNVCGEQQH (193 aa)) is the Glutamine amidotransferase type-1 domain. Cysteine 275 (nucleophile; for GATase activity) is an active-site residue. The L-glutamine site is built by glutamine 279, asparagine 317, glycine 319, and phenylalanine 320. Residues histidine 361 and glutamate 363 each act as for GATase activity in the active site. A linker region spans residues 391–405 (PMNKSKIIDCPKGIN). The tract at residues 406 to 948 (KVLILGSGGL…TNDVNINEKS (543 aa)) is CPSase A. The segment at 406–1461 (KVLILGSGGL…MKGPMPIENV (1056 aa)) is CPSase (Carbamoyl-phosphate synthase). Residues arginine 526, arginine 566, glycine 572, glycine 573, lysine 603, glutamate 610, glycine 636, isoleucine 637, histidine 638, glutamine 679, and glutamate 693 each contribute to the ATP site. ATP-grasp domains lie at 530 to 722 (AEKL…KVAL) and 1069 to 1260 (SRLL…KIII). Mg(2+) is bound by residues glutamine 679, glutamate 693, and asparagine 695. 3 residues coordinate Mn(2+): glutamine 679, glutamate 693, and asparagine 695. The tract at residues 949–1461 (YITLGSGSYR…MKGPMPIENV (513 aa)) is CPSase B. ATP contacts are provided by arginine 1105, lysine 1144, isoleucine 1146, glutamate 1151, glycine 1176, valine 1177, histidine 1178, serine 1179, glutamine 1219, and glutamate 1231. Residues glutamine 1219, glutamate 1231, and asparagine 1233 each coordinate Mg(2+). Mn(2+) contacts are provided by glutamine 1219, glutamate 1231, and asparagine 1233. Residues 1324-1470 (FKAPEKNVLL…VDWRTSNKII (147 aa)) enclose the MGS-like domain. Positions 1463-1797 (WRTSNKIIRL…VRGKVVKVVL (335 aa)) are DHOase (dihydroorotase). Zn(2+) is bound by residues histidine 1479 and histidine 1481. Positions 1483 and 1513 each coordinate (S)-dihydroorotate. Lysine 1564, histidine 1599, cysteine 1622, histidine 1623, and glutamate 1646 together coordinate Zn(2+). Lysine 1564 carries the N6-carboxylysine modification. Arginine 1670 contacts (S)-dihydroorotate. Residue aspartate 1695 participates in Zn(2+) binding. Aspartate 1695 serves as the catalytic For DHOase activity. Residues histidine 1699 and proline 1711 each contribute to the (S)-dihydroorotate site. Positions 1798–1916 (RGQIAFIDGK…DTLQTAFNIS (119 aa)) are linker. The segment at 1917–2225 (DNSLAGKHIF…LLALVFGAGV (309 aa)) is ATCase (Aspartate transcarbamylase). Positions 1974 and 1975 each coordinate carbamoyl phosphate. Lysine 2002 contacts L-aspartate. Positions 2023, 2051, and 2054 each coordinate carbamoyl phosphate. 2 residues coordinate L-aspartate: arginine 2084 and arginine 2145. Residues leucine 2184 and proline 2185 each contribute to the carbamoyl phosphate site.

The protein in the N-terminal section; belongs to the CarA family. In the 2nd section; belongs to the CarB family. It in the 3rd section; belongs to the metallo-dependent hydrolases superfamily. DHOase family. CAD subfamily. This sequence in the C-terminal section; belongs to the aspartate/ornithine carbamoyltransferase superfamily. ATCase family. Homohexamer. Requires Mg(2+) as cofactor. The cofactor is Mn(2+). Zn(2+) is required as a cofactor.

The protein localises to the cytoplasm. The catalysed reaction is hydrogencarbonate + L-glutamine + 2 ATP + H2O = carbamoyl phosphate + L-glutamate + 2 ADP + phosphate + 2 H(+). It carries out the reaction L-glutamine + H2O = L-glutamate + NH4(+). The enzyme catalyses hydrogencarbonate + NH4(+) + 2 ATP = carbamoyl phosphate + 2 ADP + phosphate + 2 H(+). It catalyses the reaction carbamoyl phosphate + L-aspartate = N-carbamoyl-L-aspartate + phosphate + H(+). The catalysed reaction is (S)-dihydroorotate + H2O = N-carbamoyl-L-aspartate + H(+). It participates in pyrimidine metabolism; UMP biosynthesis via de novo pathway; (S)-dihydroorotate from bicarbonate: step 1/3. The protein operates within pyrimidine metabolism; UMP biosynthesis via de novo pathway; (S)-dihydroorotate from bicarbonate: step 2/3. Its pathway is pyrimidine metabolism; UMP biosynthesis via de novo pathway; (S)-dihydroorotate from bicarbonate: step 3/3. Its activity is regulated as follows. Allosterically regulated and controlled by phosphorylation. 5-phosphoribose 1-diphosphate is an activator while UMP is an inhibitor of the CPSase reaction. Multifunctional protein that encodes the first 3 enzymatic activities of the de novo pyrimidine pathway: carbamoylphosphate synthetase (CPSase; EC 6.3.5.5), aspartate transcarbamylase (ATCase; EC 2.1.3.2) and dihydroorotase (DHOase; EC 3.5.2.3). The CPSase-function is accomplished in 2 steps, by a glutamine-dependent amidotransferase activity (GATase) that binds and cleaves glutamine to produce ammonia, followed by an ammonium-dependent carbamoyl phosphate synthetase, which reacts with the ammonia, hydrogencarbonate and ATP to form carbamoyl phosphate. The endogenously produced carbamoyl phosphate is sequestered and channeled to the ATCase active site. ATCase then catalyzes the formation of carbamoyl-L-aspartate from L-aspartate and carbamoyl phosphate. In the last step, DHOase catalyzes the cyclization of carbamoyl aspartate to dihydroorotate. In Dictyostelium discoideum (Social amoeba), this protein is Multifunctional protein pyr1-3 (pyr1-3).